A 306-amino-acid chain; its full sequence is Methionyl-tRNA formyltransferase (306 aa).

110–113 (SLLP) lines the (6S)-5,6,7,8-tetrahydrofolate pocket.

Belongs to the Fmt family.

It catalyses the reaction L-methionyl-tRNA(fMet) + (6R)-10-formyltetrahydrofolate = N-formyl-L-methionyl-tRNA(fMet) + (6S)-5,6,7,8-tetrahydrofolate + H(+). Its function is as follows. Attaches a formyl group to the free amino group of methionyl-tRNA(fMet). The formyl group appears to play a dual role in the initiator identity of N-formylmethionyl-tRNA by promoting its recognition by IF2 and preventing the misappropriation of this tRNA by the elongation apparatus. The chain is Methionyl-tRNA formyltransferase from Brucella abortus (strain S19).